The following is a 400-amino-acid chain: NADH-quinone oxidoreductase subunit D (400 aa).

This sequence belongs to the complex I 49 kDa subunit family. As to quaternary structure, NDH-1 is composed of 14 different subunits. Subunits NuoB, C, D, E, F, and G constitute the peripheral sector of the complex.

The protein localises to the cell inner membrane. The enzyme catalyses a quinone + NADH + 5 H(+)(in) = a quinol + NAD(+) + 4 H(+)(out). In terms of biological role, NDH-1 shuttles electrons from NADH, via FMN and iron-sulfur (Fe-S) centers, to quinones in the respiratory chain. The immediate electron acceptor for the enzyme in this species is believed to be a menaquinone. Couples the redox reaction to proton translocation (for every two electrons transferred, four hydrogen ions are translocated across the cytoplasmic membrane), and thus conserves the redox energy in a proton gradient. This is NADH-quinone oxidoreductase subunit D from Pelodictyon phaeoclathratiforme (strain DSM 5477 / BU-1).